The chain runs to 358 residues: Heme A synthase (358 aa).

The next 8 helical transmembrane spans lie at 25–45 (LVRY…MVGG), 111–131 (LLAR…WLTG), 141–161 (MLGL…MVAS), 176–196 (IHLT…RGLV), 210–230 (FAGW…LVAG), 269–289 (VQFV…LHAV), 304–324 (TIVL…TLLM), and 326–346 (APLH…AFAV). H273 serves as a coordination point for heme. H334 provides a ligand contact to heme.

It belongs to the COX15/CtaA family. Type 2 subfamily. In terms of assembly, interacts with CtaB. Requires heme b as cofactor.

Its subcellular location is the cell membrane. The catalysed reaction is Fe(II)-heme o + 2 A + H2O = Fe(II)-heme a + 2 AH2. It participates in porphyrin-containing compound metabolism; heme A biosynthesis; heme A from heme O: step 1/1. Functionally, catalyzes the conversion of heme O to heme A by two successive hydroxylations of the methyl group at C8. The first hydroxylation forms heme I, the second hydroxylation results in an unstable dihydroxymethyl group, which spontaneously dehydrates, resulting in the formyl group of heme A. The chain is Heme A synthase from Brucella abortus (strain S19).